The sequence spans 205 residues: Cytochrome c oxidase subunit 3 (205 aa).

5 consecutive transmembrane segments (helical) span residues 28–48 (GTIV…AMYF), 72–92 (ALVI…GVFA), 104–124 (WFSL…YEYF), 142–162 (FFIT…AFVV), and 184–204 (SYYW…IYFI).

This sequence belongs to the cytochrome c oxidase subunit 3 family. As to quaternary structure, associates with subunits I, II and IV to form cytochrome c oxidase.

It localises to the cell membrane. It carries out the reaction 4 Fe(II)-[cytochrome c] + O2 + 8 H(+)(in) = 4 Fe(III)-[cytochrome c] + 2 H2O + 4 H(+)(out). This Corynebacterium diphtheriae (strain ATCC 700971 / NCTC 13129 / Biotype gravis) protein is Cytochrome c oxidase subunit 3 (ctaE).